A 643-amino-acid polypeptide reads, in one-letter code: Long-chain fatty acid transport protein 4 (643 aa).

2 helical membrane-spanning segments follow: residues 20-42 and 139-156; these read LPWTQVGFSLLFLYLGSGGWRFI and FVGLWLGMAKLGVEAALI. Position 243-254 (243-254) interacts with AMP; the sequence is YIYTSGTTGLPK.

This sequence belongs to the ATP-dependent AMP-binding enzyme family. Expressed at highest levels in brain, testis, colon and kidney. Expressed at medium levels in heart and liver, small intestine and stomach. Expressed at low levels in peripheral leukocytes, bone marrow, skeletal muscle and aorta. Expressed in adipose tissue. Expressed in brain gray matter.

Its subcellular location is the endoplasmic reticulum membrane. It carries out the reaction a fatty acid(in) = a fatty acid(out). It catalyses the reaction (9Z,12Z)-octadecadienoate(out) = (9Z,12Z)-octadecadienoate(in). The enzyme catalyses (9Z)-octadecenoate(out) = (9Z)-octadecenoate(in). The catalysed reaction is hexadecanoate(out) = hexadecanoate(in). It carries out the reaction a long-chain fatty acid + ATP + CoA = a long-chain fatty acyl-CoA + AMP + diphosphate. It catalyses the reaction hexadecanoate + ATP + CoA = hexadecanoyl-CoA + AMP + diphosphate. The enzyme catalyses (E)-hexadec-2-enoate + ATP + CoA = (2E)-hexadecenoyl-CoA + AMP + diphosphate. The catalysed reaction is (9Z)-octadecenoate + ATP + CoA = (9Z)-octadecenoyl-CoA + AMP + diphosphate. It carries out the reaction (5Z,8Z,11Z,14Z)-eicosatetraenoate + ATP + CoA = (5Z,8Z,11Z,14Z)-eicosatetraenoyl-CoA + AMP + diphosphate. It catalyses the reaction a very long-chain fatty acid + ATP + CoA = a very long-chain fatty acyl-CoA + AMP + diphosphate. The enzyme catalyses tetracosanoate + ATP + CoA = tetracosanoyl-CoA + AMP + diphosphate. Mediates the levels of long-chain fatty acids (LCFA) in the cell by facilitating their transport across cell membranes. Appears to be the principal fatty acid transporter in small intestinal enterocytes. Also functions as an acyl-CoA ligase catalyzing the ATP-dependent formation of fatty acyl-CoA using LCFA and very-long-chain fatty acids (VLCFA) as substrates, which prevents fatty acid efflux from cells and might drive more fatty acid uptake. Plays a role in the formation of the epidermal barrier. Required for fat absorption in early embryogenesis. Probably involved in fatty acid transport across the blood barrier. Indirectly inhibits RPE65 via substrate competition and via production of VLCFA derivatives like lignoceroyl-CoA. Prevents light-induced degeneration of rods and cones. The sequence is that of Long-chain fatty acid transport protein 4 from Homo sapiens (Human).